The sequence spans 109 residues: FAD assembly factor SdhE (109 aa).

Residues 1–22 (MQDNFTASSPSSSSSASGVAED) are disordered. A compositionally biased stretch (low complexity) spans 7 to 17 (ASSPSSSSSAS).

The protein belongs to the SdhE FAD assembly factor family.

The protein resides in the cytoplasm. Functionally, an FAD assembly protein, which accelerates covalent attachment of the cofactor into other proteins. Plays an essential role in the assembly of succinate dehydrogenase (SDH, respiratory complex II), an enzyme complex that is a component of both the tricarboxylic acid cycle and the electron transport chain, and which couples the oxidation of succinate to fumarate with the reduction of ubiquinone (coenzyme Q) to ubiquinol. Required for flavinylation of SdhA, when the SDH operon and this gene are overexpressed in G.oxydans. Flavinylation of SdhA is detected only in the presence of sdhE. The sequence is that of FAD assembly factor SdhE from Acetobacter pasteurianus (strain NBRC 105184 / IFO 3283-01).